The chain runs to 276 residues: Mitochondrial distribution and morphology protein 12 (276 aa).

An SMP-LTD domain is found at 1 to 276 (MSIDIQWNLL…FVWPSYFTLY (276 aa)). The interval 68–104 (TLYSDDSSSLDDEESDREEENMTELPPYGATENGVHK) is disordered. Acidic residues predominate over residues 75 to 89 (SSLDDEESDREEENM).

The protein belongs to the MDM12 family. As to quaternary structure, component of the ER-mitochondria encounter structure (ERMES) or MDM complex, composed of mmm1, mdm10, mdm12 and mdm34. A mmm1 homodimer associates with one molecule of mdm12 on each side in a pairwise head-to-tail manner, and the SMP-LTD domains of mmm1 and mdm12 generate a continuous hydrophobic tunnel for phospholipid trafficking.

The protein resides in the mitochondrion outer membrane. Its subcellular location is the endoplasmic reticulum membrane. In terms of biological role, component of the ERMES/MDM complex, which serves as a molecular tether to connect the endoplasmic reticulum (ER) and mitochondria. Components of this complex are involved in the control of mitochondrial shape and protein biogenesis, and function in nonvesicular lipid trafficking between the ER and mitochondria. Mdm12 is required for the interaction of the ER-resident membrane protein mmm1 and the outer mitochondrial membrane-resident beta-barrel protein mdm10. The mdm12-mmm1 subcomplex functions in the major beta-barrel assembly pathway that is responsible for biogenesis of all mitochondrial outer membrane beta-barrel proteins, and acts in a late step after the SAM complex. The mdm10-mdm12-mmm1 subcomplex further acts in the TOM40-specific pathway after the action of the mdm12-mmm1 complex. Essential for establishing and maintaining the structure of mitochondria and maintenance of mtDNA nucleoids. This chain is Mitochondrial distribution and morphology protein 12, found in Schizosaccharomyces japonicus (strain yFS275 / FY16936) (Fission yeast).